The sequence spans 468 residues: Intramembrane protease 2 (468 aa).

The Lumenal segment spans residues 1–22; sequence MAEAATEIPPTASNVTVFTFEE. N-linked (GlcNAc...) asparagine glycosylation is present at asparagine 14. A helical membrane pass occupies residues 23 to 43; the sequence is QATSSLALYGMSILCIIIGSI. Topologically, residues 44 to 70 are cytoplasmic; that stretch reads RSAQYIRTNIDKKRLIEGSITMREARK. Residues 71-91 traverse the membrane as a helical segment; the sequence is FPISASLVLFGLYLFFKPAAE. At 92–168 the chain is on the lumenal side; the sequence is RFLWVARVFQ…TNLPTIQKAE (77 aa). 2 N-linked (GlcNAc...) asparagine glycosylation sites follow: asparagine 114 and asparagine 123. A helical transmembrane segment spans residues 169–189; it reads CMQLLTFLICFEGVNAFASLL. The Cytoplasmic segment spans residues 190-247; it reads KPFVTAFLKKMPLVPSFLRFNAPYLFSLKKGNKEMEEGDIEDAKKKETEYLFKIDFDR. Residues 248–265 form a helical membrane-spanning segment; the sequence is YDIIALLMCSPILISHLL. At 266 to 267 the chain is on the lumenal side; it reads KR. The chain crosses the membrane as a helical span at residues 268–284; sequence HWITNNIIGVSFSILGI. Residues 285-296 are Cytoplasmic-facing; sequence ERLHLASFKAGS. Residues 297-317 form a helical membrane-spanning segment; it reads LLLVGLFFYDIFWVFGTDVMT. The active site involves aspartate 306. At 318 to 343 the chain is on the lumenal side; sequence SVAKGIDAPILLQFPQDIYRNGIMEA. Residues 344–364 traverse the membrane as a helical segment; the sequence is SKHSMLGLGDIVIPGIFIALL. Residue aspartate 353 is part of the active site. The Cytoplasmic portion of the chain corresponds to 365–388; sequence RRFDYRVVQTTAESKAPQGSLKGR. The helical transmembrane segment at 389–409 threads the bilayer; sequence YYFVVTVVAYMAGLFITMAVM. Residues 410–415 are Lumenal-facing; sequence HHFKAA. Residues 416–436 form a helical membrane-spanning segment; sequence QPALLYLVPCCLFVPLLLAVI. Residues 417–419 carry the PAL motif; that stretch reads PAL. Residues 437–468 are Cytoplasmic-facing; the sequence is RGELSALWNYDESRHVDNEENRKKVDSGKKNN.

Belongs to the peptidase A22B family.

The protein resides in the membrane. It localises to the endoplasmic reticulum membrane. Its function is as follows. Acts as intramembrane protease. In larvae, required for the complete shedding of the cuticle during molting, possibly by regulating cholesterol uptake via lrp-1. Involved in embryonic and larval development. The protein is Intramembrane protease 2 of Caenorhabditis elegans.